The chain runs to 195 residues: MRKAEISRKTAETDISVTVDLDGTGRYDIRTGVGFFDHMMDQLARHALIDITLRCEGDLHIDDHHTVEDCGIALGQALTRALGDKRGIRRYGSFHLAMDDALVRAALDLSGRPFLVWNLPFPTEKIGSFDTELVREFFQAFATHGGITLHVDLIHGVNSHHIAEAAFKAVARSLREAVEPDPRRADAIPSTKGML.

The protein belongs to the imidazoleglycerol-phosphate dehydratase family.

It is found in the cytoplasm. It catalyses the reaction D-erythro-1-(imidazol-4-yl)glycerol 3-phosphate = 3-(imidazol-4-yl)-2-oxopropyl phosphate + H2O. It participates in amino-acid biosynthesis; L-histidine biosynthesis; L-histidine from 5-phospho-alpha-D-ribose 1-diphosphate: step 6/9. The protein is Imidazoleglycerol-phosphate dehydratase of Cereibacter sphaeroides (strain ATCC 17029 / ATH 2.4.9) (Rhodobacter sphaeroides).